Reading from the N-terminus, the 217-residue chain is Redox-sensing transcriptional repressor Rex (217 aa).

A DNA-binding region (H-T-H motif) is located at residues 18–57 (LYYRFLKNLHASGKQRVSSAELSDAVKVDSATIRRDFSYF). NAD(+) is bound at residue 92–97 (GVGNLG).

It belongs to the transcriptional regulatory Rex family. As to quaternary structure, homodimer.

The protein resides in the cytoplasm. Modulates transcription in response to changes in cellular NADH/NAD(+) redox state. The chain is Redox-sensing transcriptional repressor Rex from Bacillus pumilus (strain SAFR-032).